The following is a 37-amino-acid chain: Large ribosomal subunit protein bL36c (37 aa).

Belongs to the bacterial ribosomal protein bL36 family.

The protein localises to the plastid. It localises to the chloroplast. The sequence is that of Large ribosomal subunit protein bL36c from Ostreococcus tauri.